The following is a 723-amino-acid chain: Fatty acid oxidation complex subunit alpha (723 aa).

Positions 1–189 (MIYQAETLQV…KIGLLDAVVD (189 aa)) are enoyl-CoA hydratase/isomerase. Aspartate 296 is a substrate binding site. Residues 311-723 (SKDTQRAAVL…FYGAQQQGSI (413 aa)) form a 3-hydroxyacyl-CoA dehydrogenase region. NAD(+) contacts are provided by residues methionine 325, aspartate 344, 401 to 403 (VVE), lysine 408, and serine 430. The active-site For 3-hydroxyacyl-CoA dehydrogenase activity is histidine 451. Asparagine 454 provides a ligand contact to NAD(+). Asparagine 501 and tyrosine 661 together coordinate substrate.

This sequence in the N-terminal section; belongs to the enoyl-CoA hydratase/isomerase family. The protein in the C-terminal section; belongs to the 3-hydroxyacyl-CoA dehydrogenase family. Heterotetramer of two alpha chains (FadB) and two beta chains (FadA).

The enzyme catalyses a (3S)-3-hydroxyacyl-CoA + NAD(+) = a 3-oxoacyl-CoA + NADH + H(+). The catalysed reaction is a (3S)-3-hydroxyacyl-CoA = a (2E)-enoyl-CoA + H2O. It catalyses the reaction a 4-saturated-(3S)-3-hydroxyacyl-CoA = a (3E)-enoyl-CoA + H2O. It carries out the reaction (3S)-3-hydroxybutanoyl-CoA = (3R)-3-hydroxybutanoyl-CoA. The enzyme catalyses a (3Z)-enoyl-CoA = a 4-saturated (2E)-enoyl-CoA. The catalysed reaction is a (3E)-enoyl-CoA = a 4-saturated (2E)-enoyl-CoA. Its pathway is lipid metabolism; fatty acid beta-oxidation. Functionally, involved in the aerobic and anaerobic degradation of long-chain fatty acids via beta-oxidation cycle. Catalyzes the formation of 3-oxoacyl-CoA from enoyl-CoA via L-3-hydroxyacyl-CoA. It can also use D-3-hydroxyacyl-CoA and cis-3-enoyl-CoA as substrate. The polypeptide is Fatty acid oxidation complex subunit alpha (Vibrio campbellii (strain ATCC BAA-1116)).